The sequence spans 576 residues: Septation ring formation regulator EzrA (576 aa).

Residues 1–7 lie on the Extracellular side of the membrane; the sequence is MSSTVII. A helical transmembrane segment spans residues 8-26; that stretch reads LIVVLLVILVAFYAFAILM. At 27–576 the chain is on the cytoplasmic side; sequence RKKTEDRILA…FKNKPTPDYL (550 aa). Coiled-coil stretches lie at residues 105–134, 254–305, and 356–402; these read RARE…VAQL, ENVN…FERE, and GYQE…IEKN.

It belongs to the EzrA family.

The protein localises to the cell membrane. In terms of biological role, negative regulator of FtsZ ring formation; modulates the frequency and position of FtsZ ring formation. Inhibits FtsZ ring formation at polar sites. Interacts either with FtsZ or with one of its binding partners to promote depolymerization. The sequence is that of Septation ring formation regulator EzrA from Lactococcus lactis subsp. cremoris (strain MG1363).